A 276-amino-acid chain; its full sequence is NADPH-dependent 7-cyano-7-deazaguanine reductase (276 aa).

83–85 contributes to the substrate binding site; that stretch reads IES. NADPH is bound at residue 85-86; sequence SK. Residue Cys-184 is the Thioimide intermediate of the active site. Catalysis depends on Asp-191, which acts as the Proton donor. 223 to 224 lines the substrate pocket; that stretch reads HE. Position 252 to 253 (252 to 253) interacts with NADPH; it reads RG.

The protein belongs to the GTP cyclohydrolase I family. QueF type 2 subfamily. As to quaternary structure, homodimer.

It localises to the cytoplasm. The enzyme catalyses 7-aminomethyl-7-carbaguanine + 2 NADP(+) = 7-cyano-7-deazaguanine + 2 NADPH + 3 H(+). It participates in tRNA modification; tRNA-queuosine biosynthesis. In terms of biological role, catalyzes the NADPH-dependent reduction of 7-cyano-7-deazaguanine (preQ0) to 7-aminomethyl-7-deazaguanine (preQ1). In Pseudomonas aeruginosa (strain LESB58), this protein is NADPH-dependent 7-cyano-7-deazaguanine reductase.